A 136-amino-acid chain; its full sequence is Large ribosomal subunit protein uL16 (136 aa).

Belongs to the universal ribosomal protein uL16 family. Part of the 50S ribosomal subunit.

In terms of biological role, binds 23S rRNA and is also seen to make contacts with the A and possibly P site tRNAs. The protein is Large ribosomal subunit protein uL16 of Pseudoalteromonas atlantica (strain T6c / ATCC BAA-1087).